Consider the following 529-residue polypeptide: tRNA-2-methylthio-N(6)-dimethylallyladenosine synthase 1 (529 aa).

The segment at 1–21 (MTQDHIVTERPPATRNDTAGN) is disordered. Residues 25–141 (RTYEVRTLGC…LPVLLERSRH (117 aa)) form the MTTase N-terminal domain. The [4Fe-4S] cluster site is built by Cys34, Cys70, Cys104, Cys178, Cys182, and Cys185. Residues 164-407 (RDSAYAAWVS…VALQERISLE (244 aa)) form the Radical SAM core domain. Residues 410 to 480 (RSLVGTRQEL…PHHLIADGPL (71 aa)) form the TRAM domain. Residues 481–504 (LQHRRTPAGDASERGQTPTTRGVG) form a disordered region.

Belongs to the methylthiotransferase family. MiaB subfamily. Monomer. [4Fe-4S] cluster serves as cofactor.

The protein resides in the cytoplasm. It carries out the reaction N(6)-dimethylallyladenosine(37) in tRNA + (sulfur carrier)-SH + AH2 + 2 S-adenosyl-L-methionine = 2-methylsulfanyl-N(6)-dimethylallyladenosine(37) in tRNA + (sulfur carrier)-H + 5'-deoxyadenosine + L-methionine + A + S-adenosyl-L-homocysteine + 2 H(+). Its function is as follows. Catalyzes the methylthiolation of N6-(dimethylallyl)adenosine (i(6)A), leading to the formation of 2-methylthio-N6-(dimethylallyl)adenosine (ms(2)i(6)A) at position 37 in tRNAs that read codons beginning with uridine. The chain is tRNA-2-methylthio-N(6)-dimethylallyladenosine synthase 1 from Mycobacterium marinum (strain ATCC BAA-535 / M).